The primary structure comprises 85 residues: RNA-binding protein Hfq (85 aa).

Residues Asp-10–Val-69 form the Sm domain.

The protein belongs to the Hfq family. As to quaternary structure, homohexamer.

In terms of biological role, RNA chaperone that binds small regulatory RNA (sRNAs) and mRNAs to facilitate mRNA translational regulation in response to envelope stress, environmental stress and changes in metabolite concentrations. Also binds with high specificity to tRNAs. The sequence is that of RNA-binding protein Hfq from Laribacter hongkongensis (strain HLHK9).